The sequence spans 98 residues: NADH-ubiquinone oxidoreductase chain 4L (98 aa).

A run of 3 helical transmembrane segments spans residues methionine 1 to methionine 21, alanine 29 to leucine 49, and isoleucine 61 to isoleucine 81.

This sequence belongs to the complex I subunit 4L family. As to quaternary structure, core subunit of respiratory chain NADH dehydrogenase (Complex I) which is composed of 45 different subunits.

The protein localises to the mitochondrion inner membrane. The enzyme catalyses a ubiquinone + NADH + 5 H(+)(in) = a ubiquinol + NAD(+) + 4 H(+)(out). Core subunit of the mitochondrial membrane respiratory chain NADH dehydrogenase (Complex I) which catalyzes electron transfer from NADH through the respiratory chain, using ubiquinone as an electron acceptor. Part of the enzyme membrane arm which is embedded in the lipid bilayer and involved in proton translocation. This Kogia breviceps (Pygmy sperm whale) protein is NADH-ubiquinone oxidoreductase chain 4L (MT-ND4L).